The following is a 373-amino-acid chain: MLIIIRPSGEIALKSPRSRRNFEHTLANNIRSVIKEGKIWRSQGVLFLEVNDDNKNIEELSKVFGIASFSPVMSIKSYNNNLEDIINKAKEVFAEIVKGKIFSVRAKRIGSHNFTSLDVQRKVGEALYPFSRGVNLENPEVEVFIEIRNDVAYFYHKIIKGPKGLPVGVAGKTVVLFSGGIDSPVATWMMMKRGSIPVILNFNLGGSVHRKFVLEELSVLRKWSGGHKLKLFIVNGTDVLIKLSQIEKRNRVVMLKRVMYKVAERLCDKANAKSITTGESLSQVSSQTMTNLYVTEYGIKYPIFRPLIGFDKEEIVELARKIGTYEYSIKLPEYCAISTKARTSVELDEVLKDEENLNIDYEKVLENSEVIEI.

Residues 54 to 158 enclose the THUMP domain; the sequence is NKNIEELSKV…NDVAYFYHKI (105 aa). ATP contacts are provided by residues 176 to 177, 201 to 202, Lys256, Gly278, and Gln287; these read LF and NF.

The protein belongs to the ThiI family.

The protein resides in the cytoplasm. The catalysed reaction is [ThiI sulfur-carrier protein]-S-sulfanyl-L-cysteine + a uridine in tRNA + 2 reduced [2Fe-2S]-[ferredoxin] + ATP + H(+) = [ThiI sulfur-carrier protein]-L-cysteine + a 4-thiouridine in tRNA + 2 oxidized [2Fe-2S]-[ferredoxin] + AMP + diphosphate. It carries out the reaction [ThiS sulfur-carrier protein]-C-terminal Gly-Gly-AMP + S-sulfanyl-L-cysteinyl-[cysteine desulfurase] + AH2 = [ThiS sulfur-carrier protein]-C-terminal-Gly-aminoethanethioate + L-cysteinyl-[cysteine desulfurase] + A + AMP + 2 H(+). It functions in the pathway cofactor biosynthesis; thiamine diphosphate biosynthesis. Functionally, catalyzes the ATP-dependent transfer of a sulfur to tRNA to produce 4-thiouridine in position 8 of tRNAs, which functions as a near-UV photosensor. Also catalyzes the transfer of sulfur to the sulfur carrier protein ThiS, forming ThiS-thiocarboxylate. This is a step in the synthesis of thiazole, in the thiamine biosynthesis pathway. The sulfur is donated as persulfide by IscS. In Saccharolobus islandicus (strain M.14.25 / Kamchatka #1) (Sulfolobus islandicus), this protein is Probable tRNA sulfurtransferase.